Consider the following 580-residue polypeptide: uncharacterized protein (580 aa).

A compositionally biased stretch (polar residues) spans 1–44; the sequence is MSESSVNADTPKNTNDVLNGAYQSATTEPEGQYRSATDNPSLYQ. Positions 1 to 45 are disordered; it reads MSESSVNADTPKNTNDVLNGAYQSATTEPEGQYRSATDNPSLYQV. Serine 99 carries the post-translational modification Phosphoserine. The next 12 helical transmembrane spans lie at 143–163, 177–197, 207–227, 235–255, 265–285, 295–315, 370–390, 405–425, 450–470, 476–496, 511–533, and 546–566; these read IYAY…PASA, LLNV…WAPM, LYIG…AQDI, FFGG…FADM, ITIF…VGGF, WTEY…YLFC, PIVF…YLLL, LGVS…GCGI, LPPM…LAWS, VHWI…LLIF, AASV…PLFA, and GSLL…FFFF.

The protein belongs to the major facilitator superfamily. CAR1 family.

Its subcellular location is the membrane. This is an uncharacterized protein from Schizosaccharomyces pombe (strain 972 / ATCC 24843) (Fission yeast).